A 551-amino-acid polypeptide reads, in one-letter code: Dihydroxy-acid dehydratase (551 aa).

A Mg(2+)-binding site is contributed by aspartate 78. Cysteine 119 is a binding site for [2Fe-2S] cluster. The Mg(2+) site is built by aspartate 120 and lysine 121. Residue lysine 121 is modified to N6-carboxylysine. A [2Fe-2S] cluster-binding site is contributed by cysteine 191. Residue glutamate 441 coordinates Mg(2+). The active-site Proton acceptor is serine 467.

It belongs to the IlvD/Edd family. Homodimer. [2Fe-2S] cluster serves as cofactor. Requires Mg(2+) as cofactor.

It catalyses the reaction (2R)-2,3-dihydroxy-3-methylbutanoate = 3-methyl-2-oxobutanoate + H2O. The catalysed reaction is (2R,3R)-2,3-dihydroxy-3-methylpentanoate = (S)-3-methyl-2-oxopentanoate + H2O. It functions in the pathway amino-acid biosynthesis; L-isoleucine biosynthesis; L-isoleucine from 2-oxobutanoate: step 3/4. It participates in amino-acid biosynthesis; L-valine biosynthesis; L-valine from pyruvate: step 3/4. Its function is as follows. Functions in the biosynthesis of branched-chain amino acids. Catalyzes the dehydration of (2R,3R)-2,3-dihydroxy-3-methylpentanoate (2,3-dihydroxy-3-methylvalerate) into 2-oxo-3-methylpentanoate (2-oxo-3-methylvalerate) and of (2R)-2,3-dihydroxy-3-methylbutanoate (2,3-dihydroxyisovalerate) into 2-oxo-3-methylbutanoate (2-oxoisovalerate), the penultimate precursor to L-isoleucine and L-valine, respectively. This is Dihydroxy-acid dehydratase from Pyrococcus abyssi (strain GE5 / Orsay).